The primary structure comprises 194 residues: MGKRDQLKPKANVSSYIHFLLNYRNKFKEQQPNTYLGFKEFSRKCSEKWRSISKHEKAKYEALAKLDKARYQEEMMNYFGRRKKRRKRDPHAPRRPPSSFLLFCQDHYAQLKSENPSWSVVQVAKASGKMWSAKTDVDKQPYEQRAALLRAKYREELSVYRNQFNARKTCLQESATNQCREFEQAESDTTDGSN.

2 consecutive DNA-binding regions (HMG box) follow at residues 9-79 and 93-161; these read PKAN…MNYF and PRRP…SVYR.

The protein belongs to the HMGB family.

The protein resides in the nucleus. The protein localises to the chromosome. This is High mobility group protein B4 (HMGB4) from Bos taurus (Bovine).